A 176-amino-acid chain; its full sequence is Retinol-binding protein 4-B (176 aa).

Ser-1 is modified (N-acetylserine). 3 disulfides stabilise this stretch: Cys-3–Cys-159, Cys-69–Cys-173, and Cys-119–Cys-128. Position 97 (Gln-97) interacts with substrate.

This sequence belongs to the calycin superfamily. Lipocalin family.

The protein localises to the secreted. In terms of biological role, RBP delivers retinol from the liver stores to the peripheral tissues. In plasma, the RBP-retinol complex interacts with transthyretin, this prevents its loss by filtration through the kidney glomeruli. This is Retinol-binding protein 4-B (rbp4b) from Oncorhynchus mykiss (Rainbow trout).